The chain runs to 159 residues: Large ribosomal subunit protein uL10 (159 aa).

It belongs to the universal ribosomal protein uL10 family. In terms of assembly, part of the ribosomal stalk of the 50S ribosomal subunit. The N-terminus interacts with L11 and the large rRNA to form the base of the stalk. The C-terminus forms an elongated spine to which L12 dimers bind in a sequential fashion forming a multimeric L10(L12)X complex.

In terms of biological role, forms part of the ribosomal stalk, playing a central role in the interaction of the ribosome with GTP-bound translation factors. The protein is Large ribosomal subunit protein uL10 of Sulfurimonas denitrificans (strain ATCC 33889 / DSM 1251) (Thiomicrospira denitrificans (strain ATCC 33889 / DSM 1251)).